Reading from the N-terminus, the 423-residue chain is 3-phosphoshikimate 1-carboxyvinyltransferase (423 aa).

3 residues coordinate 3-phosphoshikimate: K21, S22, and R26. K21 provides a ligand contact to phosphoenolpyruvate. Phosphoenolpyruvate-binding residues include G92 and R120. 3-phosphoshikimate is bound by residues S164, Q166, D312, and K339. Q166 is a binding site for phosphoenolpyruvate. The active-site Proton acceptor is D312. Phosphoenolpyruvate is bound by residues R343 and R385.

It belongs to the EPSP synthase family. Monomer.

Its subcellular location is the cytoplasm. The catalysed reaction is 3-phosphoshikimate + phosphoenolpyruvate = 5-O-(1-carboxyvinyl)-3-phosphoshikimate + phosphate. Its pathway is metabolic intermediate biosynthesis; chorismate biosynthesis; chorismate from D-erythrose 4-phosphate and phosphoenolpyruvate: step 6/7. Functionally, catalyzes the transfer of the enolpyruvyl moiety of phosphoenolpyruvate (PEP) to the 5-hydroxyl of shikimate-3-phosphate (S3P) to produce enolpyruvyl shikimate-3-phosphate and inorganic phosphate. In Thermoanaerobacter pseudethanolicus (strain ATCC 33223 / 39E) (Clostridium thermohydrosulfuricum), this protein is 3-phosphoshikimate 1-carboxyvinyltransferase.